The chain runs to 260 residues: Imidazole glycerol phosphate synthase subunit HisF (260 aa).

Residues aspartate 11 and aspartate 130 contribute to the active site.

The protein belongs to the HisA/HisF family. Heterodimer of HisH and HisF.

It localises to the cytoplasm. The enzyme catalyses 5-[(5-phospho-1-deoxy-D-ribulos-1-ylimino)methylamino]-1-(5-phospho-beta-D-ribosyl)imidazole-4-carboxamide + L-glutamine = D-erythro-1-(imidazol-4-yl)glycerol 3-phosphate + 5-amino-1-(5-phospho-beta-D-ribosyl)imidazole-4-carboxamide + L-glutamate + H(+). It functions in the pathway amino-acid biosynthesis; L-histidine biosynthesis; L-histidine from 5-phospho-alpha-D-ribose 1-diphosphate: step 5/9. In terms of biological role, IGPS catalyzes the conversion of PRFAR and glutamine to IGP, AICAR and glutamate. The HisF subunit catalyzes the cyclization activity that produces IGP and AICAR from PRFAR using the ammonia provided by the HisH subunit. In Endomicrobium trichonymphae, this protein is Imidazole glycerol phosphate synthase subunit HisF.